The chain runs to 153 residues: Large ribosomal subunit protein bL9 (153 aa).

Belongs to the bacterial ribosomal protein bL9 family.

Its function is as follows. Binds to the 23S rRNA. In Mycoplasma mycoides subsp. mycoides SC (strain CCUG 32753 / NCTC 10114 / PG1), this protein is Large ribosomal subunit protein bL9.